The chain runs to 237 residues: HTH-type transcriptional regulator GmuR (237 aa).

Positions 1-69 (MNKYEIIANE…RGHGTFIIQS (69 aa)) constitute an HTH gntR-type domain. A DNA-binding region (H-T-H motif) is located at residues 29–48 (EVSLAKEFNSSRMTMKRALD).

It is found in the cytoplasm. Its function is as follows. Transcriptional repressor of the gmuBACDREFG operon which is involved in the uptake and degradation of glucomannan. This Bacillus subtilis (strain 168) protein is HTH-type transcriptional regulator GmuR (gmuR).